Consider the following 446-residue polypeptide: tRNA modification GTPase MnmE (446 aa).

Positions 22, 80, and 119 each coordinate (6S)-5-formyl-5,6,7,8-tetrahydrofolate. In terms of domain architecture, TrmE-type G spans 215 to 370 (GLSLVIAGRP…LKKVIKQVVG (156 aa)). Asn-225 is a K(+) binding site. Residues 225-230 (NAGKST), 244-250 (TEIAGTT), and 269-272 (DTAG) each bind GTP. Residue Ser-229 coordinates Mg(2+). Residues Thr-244, Ile-246, and Thr-249 each coordinate K(+). Thr-250 is a Mg(2+) binding site. Lys-446 contacts (6S)-5-formyl-5,6,7,8-tetrahydrofolate.

This sequence belongs to the TRAFAC class TrmE-Era-EngA-EngB-Septin-like GTPase superfamily. TrmE GTPase family. Homodimer. Heterotetramer of two MnmE and two MnmG subunits. The cofactor is K(+).

It is found in the cytoplasm. In terms of biological role, exhibits a very high intrinsic GTPase hydrolysis rate. Involved in the addition of a carboxymethylaminomethyl (cmnm) group at the wobble position (U34) of certain tRNAs, forming tRNA-cmnm(5)s(2)U34. The polypeptide is tRNA modification GTPase MnmE (Legionella pneumophila subsp. pneumophila (strain Philadelphia 1 / ATCC 33152 / DSM 7513)).